Here is a 393-residue protein sequence, read N- to C-terminus: DNA-directed RNA polymerase subunit Rpo1C (393 aa).

Belongs to the RNA polymerase beta' chain family. As to quaternary structure, part of the RNA polymerase complex.

It localises to the cytoplasm. It carries out the reaction RNA(n) + a ribonucleoside 5'-triphosphate = RNA(n+1) + diphosphate. Functionally, DNA-dependent RNA polymerase (RNAP) catalyzes the transcription of DNA into RNA using the four ribonucleoside triphosphates as substrates. Forms part of the jaw domain. The polypeptide is DNA-directed RNA polymerase subunit Rpo1C (Thermococcus celer).